Consider the following 469-residue polypeptide: 3-isopropylmalate dehydratase large subunit (469 aa).

[4Fe-4S] cluster-binding residues include C349, C410, and C413.

This sequence belongs to the aconitase/IPM isomerase family. LeuC type 1 subfamily. In terms of assembly, heterodimer of LeuC and LeuD. [4Fe-4S] cluster is required as a cofactor.

It carries out the reaction (2R,3S)-3-isopropylmalate = (2S)-2-isopropylmalate. Its pathway is amino-acid biosynthesis; L-leucine biosynthesis; L-leucine from 3-methyl-2-oxobutanoate: step 2/4. Catalyzes the isomerization between 2-isopropylmalate and 3-isopropylmalate, via the formation of 2-isopropylmaleate. This chain is 3-isopropylmalate dehydratase large subunit, found in Neisseria meningitidis serogroup B (strain ATCC BAA-335 / MC58).